We begin with the raw amino-acid sequence, 1084 residues long: TNF receptor-associated factor family protein DDB_G0272098 (1084 aa).

The LIM zinc-binding domain maps to 19-103 (YYCPDCGELL…KNRYYETKNF (85 aa)). TRAF-type zinc fingers lie at residues 122-190 (KHIK…IDHE) and 191-248 (IHLS…YNMS). Residues 265-321 (IEEQNQDIKELHNFIENHLSKKFIDLDTIVNIQKYLIKNKNQKISQLTEIIKRVDNS) are a coiled coil. 4 disordered regions span residues 348–392 (YKNS…NINE), 490–523 (IRQQQQQQQQQQQQQQQQQQQPPPTPLPPQNTTI), 537–656 (NNNI…KDGL), and 709–897 (SIVE…NDDD). 4 stretches are compositionally biased toward low complexity: residues 349-375 (KNSNSNNNNNNKNTNENENTNENTNEN), 492-509 (QQQQQQQQQQQQQQQQQQ), 537-549 (NNNINENNNNNNK), and 556-570 (ITAATATNNSNTTST). Residues 489–553 (LIRQQQQQQQ…NNNNNKNNDD (65 aa)) adopt a coiled-coil conformation. A compositionally biased stretch (polar residues) spans 571 to 586 (HTILNGTNNEASMTDI). Low complexity predominate over residues 587–637 (NETTSTTTTAETTEATASESTEESNNTAETTTTTTTTTTTITTAAETVNST). A compositionally biased stretch (basic and acidic residues) spans 644-656 (TSEKVEEKGKDGL). Residues 735-852 (NGNENENENE…NNNNNNNENV (118 aa)) adopt a coiled-coil conformation. Positions 739-757 (NENENENENENENENENEN) are enriched in acidic residues. Residues 774-785 (SNINTSNDTEPT) show a composition bias toward polar residues. Positions 790–799 (EDIKKNKENE) are enriched in basic and acidic residues. The span at 809 to 849 (NNNIKSVEDTNNNNNNNNNNNNNNNNNNNNNNNNNNNNNNN) shows a compositional bias: low complexity. Basic and acidic residues-rich tracts occupy residues 853–864 (YDIKKDRNRENV) and 875–892 (ENGKINDNGDVKMGSEDK). The 134-residue stretch at 909 to 1042 (IFRNQILFKD…DNCFIVNLEV (134 aa)) folds into the MATH domain. A disordered region spans residues 1056 to 1084 (LLQKSSPPAATTTTTTSSSSSKTTPKTKR). Positions 1059–1084 (KSSPPAATTTTTTSSSSSKTTPKTKR) are enriched in low complexity.

It belongs to the TNF receptor-associated factor family.

It is found in the cytoplasm. In terms of biological role, probable adapter protein and signal transducer that links members of the tumor necrosis factor receptor family to different signaling pathways by association with the receptor cytoplasmic domain and kinases. The sequence is that of TNF receptor-associated factor family protein DDB_G0272098 from Dictyostelium discoideum (Social amoeba).